Reading from the N-terminus, the 62-residue chain is Small ribosomal subunit protein uS14 (62 aa).

Residues Cys-25, Cys-28, Cys-41, and Cys-44 each coordinate Zn(2+).

This sequence belongs to the universal ribosomal protein uS14 family. Zinc-binding uS14 subfamily. As to quaternary structure, part of the 30S ribosomal subunit. Contacts proteins S3 and S10. The cofactor is Zn(2+).

Binds 16S rRNA, required for the assembly of 30S particles and may also be responsible for determining the conformation of the 16S rRNA at the A site. This Persephonella marina (strain DSM 14350 / EX-H1) protein is Small ribosomal subunit protein uS14.